The following is a 346-amino-acid chain: GTPase Obg (346 aa).

An Obg domain is found at 1–158 (MFVDECVVKL…GTYRLVLKSI (158 aa)). Positions 159–332 (ADVGLVGFPN…LKKELLKRVT (174 aa)) constitute an OBG-type G domain. Residues 165–172 (GFPNAGKS), 190–194 (FTTLH), 216–219 (DVPG), 286–289 (NKMD), and 313–315 (SCL) contribute to the GTP site. Mg(2+) is bound by residues S172 and T192.

This sequence belongs to the TRAFAC class OBG-HflX-like GTPase superfamily. OBG GTPase family. Monomer. Mg(2+) is required as a cofactor.

Its subcellular location is the cytoplasm. In terms of biological role, an essential GTPase which binds GTP, GDP and possibly (p)ppGpp with moderate affinity, with high nucleotide exchange rates and a fairly low GTP hydrolysis rate. Plays a role in control of the cell cycle, stress response, ribosome biogenesis and in those bacteria that undergo differentiation, in morphogenesis control. In Opitutus terrae (strain DSM 11246 / JCM 15787 / PB90-1), this protein is GTPase Obg.